Reading from the N-terminus, the 271-residue chain is Tumor necrosis factor receptor superfamily member 4 (271 aa).

The first 19 residues, 1–19 (MYVWVQQPTAFLLLGLSLG), serve as a signal peptide directing secretion. Residues 20 to 210 (VTVKLNCVKD…TPTLVAPEGP (191 aa)) lie on the Extracellular side of the membrane. 2 TNFR-Cys repeats span residues 25-60 (NCVK…TVCH) and 61-102 (PCEP…DTVC). 8 cysteine pairs are disulfide-bonded: C26–C37, C38–C51, C41–C59, C62–C76, C79–C94, C82–C102, C104–C122, and C125–C138. The TNFR-Cys 3; truncated repeat unit spans residues 103-123 (QCRPGTQPRQDSSHKLGVDCV). The stretch at 124–164 (PCPPGHFSPGSNQACKPWTNCTLSGKQIRHPASNSLDTVCE) is one TNFR-Cys 4 repeat. Residue N143 is glycosylated (N-linked (GlcNAc...) asparagine). Residues C144 and C163 are joined by a disulfide bond. A helical transmembrane segment spans residues 211–235 (AFAVILGLGLGLLAPLTVLLALYLL). At 236 to 271 (RKAWRSPNTPKPCWGNSFRTPIQEEQTDTHFTLAKI) the chain is on the cytoplasmic side.

As to quaternary structure, interacts with TRAF2, TRAF3 and TRAF5. As to expression, activated T-cells.

Its subcellular location is the membrane. Its function is as follows. Receptor for TNFSF4/OX40L/GP34. Is a costimulatory molecule implicated in long-term T-cell immunity. The polypeptide is Tumor necrosis factor receptor superfamily member 4 (Tnfrsf4) (Rattus norvegicus (Rat)).